The primary structure comprises 115 residues: Large ribosomal subunit protein bL20 (115 aa).

The protein belongs to the bacterial ribosomal protein bL20 family.

Functionally, binds directly to 23S ribosomal RNA and is necessary for the in vitro assembly process of the 50S ribosomal subunit. It is not involved in the protein synthesizing functions of that subunit. In Salinibacter ruber (strain DSM 13855 / M31), this protein is Large ribosomal subunit protein bL20.